Here is a 341-residue protein sequence, read N- to C-terminus: UDP-3-O-acylglucosamine N-acyltransferase (341 aa).

His239 acts as the Proton acceptor in catalysis.

This sequence belongs to the transferase hexapeptide repeat family. LpxD subfamily. Homotrimer.

The enzyme catalyses a UDP-3-O-[(3R)-3-hydroxyacyl]-alpha-D-glucosamine + a (3R)-hydroxyacyl-[ACP] = a UDP-2-N,3-O-bis[(3R)-3-hydroxyacyl]-alpha-D-glucosamine + holo-[ACP] + H(+). Its pathway is bacterial outer membrane biogenesis; LPS lipid A biosynthesis. Catalyzes the N-acylation of UDP-3-O-acylglucosamine using 3-hydroxyacyl-ACP as the acyl donor. Is involved in the biosynthesis of lipid A, a phosphorylated glycolipid that anchors the lipopolysaccharide to the outer membrane of the cell. The protein is UDP-3-O-acylglucosamine N-acyltransferase of Shewanella sp. (strain MR-4).